The sequence spans 1024 residues: Hemolysin, plasmid (1024 aa).

Residues 20-32 show a composition bias toward polar residues; the sequence is AANKLHSAGQSTK. Residues 20 to 39 form a disordered region; that stretch reads AANKLHSAGQSTKDALKKAA. Helical transmembrane passes span 238-260, 268-327, and 365-411; these read IGAG…ILSN, KAAA…LSIA, and DASL…GILE. N6-myristoyl lysine attachment occurs at residues lysine 564 and lysine 690. 6 Hemolysin-type calcium-binding repeats span residues 732–749, 750–767, 768–785, 786–803, 816–833, and 834–851; these read FGSK…DDLI, EGND…NDTL, SGGN…NDKL, IGVA…DDEF, FGGK…ADLL, and DGGE…NDIY.

It belongs to the RTX prokaryotic toxin (TC 1.C.11) family. Myristoylated by HlyC; the toxin only becomes active when modified. Mainly myristoylated, while a minor fraction is acylated with pentadecanoyl (C15:0; 26%) and heptadecanoyl (C17:0; 6%) fatty acyl groups. Fatty acylation is involved in binding to host membranes and promotes the irreversible insertion of Hemolysin into the host cell membrane. Can be activated by both myristoylation and palmitoylation, but HlyC catalyzes lysine myristoylation.

It is found in the secreted. It localises to the host cell membrane. In terms of biological role, bacterial hemolysins are exotoxins that attack blood cell membranes and cause cell rupture by forming a pore. The sequence is that of Hemolysin, plasmid from Escherichia coli.